A 302-amino-acid chain; its full sequence is Sulfate adenylyltransferase subunit 2 (302 aa).

It belongs to the PAPS reductase family. CysD subfamily. In terms of assembly, heterodimer composed of CysD, the smaller subunit, and CysN.

It carries out the reaction sulfate + ATP + H(+) = adenosine 5'-phosphosulfate + diphosphate. It functions in the pathway sulfur metabolism; hydrogen sulfide biosynthesis; sulfite from sulfate: step 1/3. With CysN forms the ATP sulfurylase (ATPS) that catalyzes the adenylation of sulfate producing adenosine 5'-phosphosulfate (APS) and diphosphate, the first enzymatic step in sulfur assimilation pathway. APS synthesis involves the formation of a high-energy phosphoric-sulfuric acid anhydride bond driven by GTP hydrolysis by CysN coupled to ATP hydrolysis by CysD. This is Sulfate adenylyltransferase subunit 2 from Salmonella agona (strain SL483).